Consider the following 1390-residue polypeptide: DNA-directed RNA polymerase III subunit RPC1 (1390 aa).

The Zn(2+) site is built by cysteine 69, cysteine 72, cysteine 79, histidine 82, cysteine 109, and cysteine 112. DNA is bound at residue lysine 144. Zn(2+)-binding residues include cysteine 156 and cysteine 159. 6 residues coordinate DNA: lysine 167, serine 326, lysine 348, arginine 353, arginine 360, and arginine 366. The residue at position 445 (lysine 445) is an N6-acetyllysine. RNA is bound at residue arginine 464. The Mg(2+) site is built by aspartate 499, aspartate 501, and aspartate 503. Aspartate 503 is a binding site for RNA. The segment at 844–856 (PTEFFFHTMAGRE) is bridging helix. The DNA site is built by arginine 1159, arginine 1305, and lysine 1323.

The protein belongs to the RNA polymerase beta' chain family. As to quaternary structure, component of the RNA polymerase III (Pol III) complex consisting of 17 subunits: a ten-subunit catalytic core composed of POLR3A/RPC1, POLR3B/RPC2, POLR1C/RPAC1, POLR1D/RPAC2, POLR3K/RPC10, POLR2E/RPABC1, POLR2F/RPABC2, POLR2H/RPABC3, POLR2K/RPABC4 and POLR2L/RPABC5; a mobile stalk composed of two subunits POLR3H/RPC8 and CRCP/RPC9, protruding from the core and functioning primarily in transcription initiation; and additional subunits homologous to general transcription factors of the RNA polymerase II machinery, POLR3C/RPC3-POLR3F/RPC6-POLR3G/RPC7 heterotrimer required for transcription initiation and POLR3D/RPC4-POLR3E/RPC5 heterodimer involved in both transcription initiation and termination. As part of the RNA polymerase III complex, interacts with PKP2. The cofactor is Mg(2+).

Its subcellular location is the nucleus. It localises to the cytoplasm. The protein localises to the cytosol. The catalysed reaction is RNA(n) + a ribonucleoside 5'-triphosphate = RNA(n+1) + diphosphate. In terms of biological role, catalytic core component of RNA polymerase III (Pol III), a DNA-dependent RNA polymerase which synthesizes small non-coding RNAs using the four ribonucleoside triphosphates as substrates. Synthesizes 5S rRNA, snRNAs, tRNAs and miRNAs from at least 500 distinct genomic loci. Pol III-mediated transcription cycle proceeds through transcription initiation, transcription elongation and transcription termination stages. During transcription initiation, Pol III is recruited to DNA promoters type I, II or III with the help of general transcription factors and other specific initiation factors. Once the polymerase has escaped from the promoter it enters the elongation phase during which RNA is actively polymerized, based on complementarity with the template DNA strand. Transcription termination involves the release of the RNA transcript and polymerase from the DNA. Forms Pol III active center together with the second largest subunit POLR3B/RPC2. Appends one nucleotide at a time to the 3' end of the nascent RNA, with POLR3A/RPC1 contributing a Mg(2+)-coordinating DxDGD motif, and POLR3B/RPC2 participating in the coordination of a second Mg(2+) ion and providing lysine residues believed to facilitate Watson-Crick base pairing between the incoming nucleotide and template base. Typically, Mg(2+) ions direct a 5' nucleoside triphosphate to form a phosphodiester bond with the 3' hydroxyl of the preceding nucleotide of the nascent RNA, with the elimination of pyrophosphate. Pol III plays a key role in sensing and limiting infection by intracellular bacteria and DNA viruses. Acts as a nuclear and cytosolic DNA sensor involved in innate immune response. Can sense non-self dsDNA that serves as template for transcription into dsRNA. The non-self RNA polymerase III transcripts, such as Epstein-Barr virus-encoded RNAs (EBERs) induce type I interferon and NF-kappa-B through the RIG-I pathway. The sequence is that of DNA-directed RNA polymerase III subunit RPC1 from Bos taurus (Bovine).